The sequence spans 447 residues: Biotin carboxylase (447 aa).

In terms of domain architecture, Biotin carboxylation spans 1-447; that stretch reads MKFDKILIAN…STSFVQEMNK (447 aa). ATP-binding positions include Lys-117, Lys-159, 165–166, 201–204, and His-209; these read GG and EKFI. Positions 121–318 constitute an ATP-grasp domain; that stretch reads KETMQKAGVP…LLVEQIRIAQ (198 aa). Lys-238 is a hydrogencarbonate binding site. Positions 276 and 289 each coordinate ATP. Glu-276, Glu-289, and Asn-291 together coordinate Mg(2+). Mn(2+) contacts are provided by Glu-276, Glu-289, and Asn-291. Arg-293, Val-296, and Arg-339 together coordinate hydrogencarbonate. Residue Arg-293 is part of the active site. A biotin-binding site is contributed by Arg-339.

In terms of assembly, acetyl-CoA carboxylase is a heterohexamer of biotin carboxyl carrier protein, biotin carboxylase and the two subunits of carboxyl transferase in a 2:2 complex. The cofactor is Mg(2+). Mn(2+) is required as a cofactor.

The catalysed reaction is N(6)-biotinyl-L-lysyl-[protein] + hydrogencarbonate + ATP = N(6)-carboxybiotinyl-L-lysyl-[protein] + ADP + phosphate + H(+). Its pathway is lipid metabolism; malonyl-CoA biosynthesis; malonyl-CoA from acetyl-CoA: step 1/1. This protein is a component of the acetyl coenzyme A carboxylase complex; first, biotin carboxylase catalyzes the carboxylation of the carrier protein and then the transcarboxylase transfers the carboxyl group to form malonyl-CoA. The chain is Biotin carboxylase (accC) from Nostoc sp. (strain PCC 7120 / SAG 25.82 / UTEX 2576).